The sequence spans 114 residues: Ig kappa chain V region AH80-5 (114 aa).

A framework-1 region spans residues Ile1–Cys22. The tract at residues Gln23–Ser35 is complementarity-determining-1. A framework-2 region spans residues Trp36–Tyr50. A complementarity-determining-2 region spans residues Tyr51 to Ser57. The segment at Gly58 to Cys93 is framework-3. The segment at Gln94–Ala103 is complementarity-determining-3. Residues Phe104–Lys113 are framework-4.

The polypeptide is Ig kappa chain V region AH80-5 (Oryctolagus cuniculus (Rabbit)).